The sequence spans 612 residues: Cryptochrome-2 (612 aa).

The tract at residues 1-485 (MKMDKKTIVW…TARELLAKAI (485 aa)) is CNT2, binds chromophores to sense blue light and mediate CRY dimerization. In terms of domain architecture, Photolyase/cryptochrome alpha/beta spans 5-134 (KKTIVWFRRD…SVQSYNGDLL (130 aa)). An FAD-binding site is contributed by Tyr-232. Asn-235 and Ser-243 together coordinate Mg(2+). Residue 244–248 (TSLLS) coordinates FAD. His-355 provides a ligand contact to Mg(2+). FAD contacts are provided by residues Asn-356 and 387 to 389 (DAD). An ATP-binding site is contributed by 356 to 357 (NR). Asp-406 lines the ATP pocket. A CCT2/CCE2, mediates blue light signaling region spans residues 486–612 (SRTREAQIMI…TTSLGKNGCK (127 aa)). The interval 539-576 (GSKRVKPEEEEERDMKKSRGFDERELFSTAESSSSSSV) is disordered. The short motif at 541–555 (KRVKPEEEEERDMKK) is the Nuclear localization signal element. Positions 551-564 (RDMKKSRGFDEREL) are enriched in basic and acidic residues. At Ser-587 the chain carries Phosphoserine; by CK1. Positions 590–612 (KNLEGIQDSSDQITTSLGKNGCK) are disordered. Residues 596–612 (QDSSDQITTSLGKNGCK) show a composition bias toward polar residues. A phosphoserine mark is found at Ser-598 and Ser-599. Thr-603 is subject to Phosphothreonine; by CK1. Ser-605 carries the phosphoserine modification.

It belongs to the DNA photolyase class-1 family. Homodimer. Blue-light dependent dimerization. Interacts with COP1 and PHYB in the nucleus. Binds reversibly to CIBs proteins such as BHLH63/CIB1, BHLH78/CIB2, BHLH74/CIB4 and BHLH76/CIB5 after blue light illumination to stimulate their transcription factor activities. Interacts with PIF4 and PIF5 in the nucleus in response to low blue light (LBL). Binds to SPA1 in response to blue light, this interaction prevents SPA1/COP1 complex formation but stimulates interaction with COP1, and thus avoid COP1-dependent degradation of the transcription factors CO and HY5 by the proteasome and promotes hypocotyl elongation and floral initiation. Binding to ATP mediates conformational changes which facilitate flavin binding. Interacts with BIC1 in both darkness and light. Interacts with NRP. Requires FAD as cofactor. It depends on (6R)-5,10-methylene-5,6,7,8-tetrahydrofolate as a cofactor. In terms of processing, phosphorylated by CK1.3 and CK1.4; in response to blue light. Required for degradation. Adopts an open conformation when phosphorylated upon photoexcitation and thus interacts with signaling partner proteins. Not autophosphorylated, even in complex with FAD cofactor. Post-translationally, ubiquitinated; in response to blue light. Mostly expressed in the shoot meristems and root tips, and, to a lower extent, in the cotyledons, hypocotyls, and roots.

The protein resides in the nucleus. It localises to the PML body. The protein localises to the cytoplasm. In terms of biological role, photoreceptor that mediates primarily blue light inhibition of hypocotyl elongation and photoperiodic control of floral initiation, and regulates other light responses, including circadian rhythms, tropic growth, stomata opening, guard cell development, root development, bacterial and viral pathogen responses, abiotic stress responses, cell cycles, programmed cell death, apical dominance, fruit and ovule development, seed dormancy, and magnetoreception. Photoexcited cryptochromes interact with signaling partner proteins to alter gene expression at both transcriptional and post-translational levels and, consequently, regulate the corresponding metabolic and developmental programs. Blue-light absorbing flavoprotein that activates reversible flavin photoreduction via an electron transport chain comprising a tryptophan triad (W-321, W-374 and W-397), or via an alternative electron transport that involves small metabolites, including NADPH, NADH, and ATP. The half-life of the activated signaling state is about 16 minutes. Perceives low blue light (LBL) and responds by directly contacting two bHLH transcription factors, PIF4 and PIF5, at chromatin on E-box variant 5'-CA[CT]GTG-3' to promote their activity and stimulate specific gene expression to adapt global physiology (e.g. hypocotyl elongation and hyponastic growth in low blue light). In response to blue light, binds to CIB proteins (e.g. BHLH63/CIB1 and BHLH76/CIB5) to activate transcription and floral initiation. Mediates blue light-induced gene expression, floral initiation and hypocotyl elongation through the interaction with SPA1 that prevents formation of SPA1/COP1 complex but stimulates COP1 binding, and thus inhibits COP1-mediated degradation of transcription factors (e.g. CO and HY5). Promotes flowering time in continuous light (LL). Involved in shortening the circadian clock period, especially at 27 degrees Celsius, in blue light (BL). Required to maintain clock genes expression rhythm. Triggers nuclear accumulation of ROS in response to blue light illumination. Involved in blue light-dependent stomatal opening, transpiration and inhibition of stem and root growth, probably by regulating abscisic acid (ABA). Regulates the timing of flowering by promoting the expression of 'FLOWERING LOCUS T' (FT) in vascular bundles. Negatively regulated by 'FLOWERING LOCUS C' (FLC). General positive regulator of reversible low light-induced chromatin decompaction. Involved in triggering chromatin decondensation during floral transition. Together with phototropins, involved in phototropism regulation by various blue light fluence; blue light attenuates phototropism in high fluence rates (100 umol.m-2.s-1) but enhances phototropism in low fluence rates (&lt;1.0 umol.m-2.s-1). The effect of near-null magnetic field on flowering is altered by changes of blue light cycle and intensity in a CRY1/CRY2-dependent manner. Involved in the strigolactone signaling that regulates hypocotyl growth in response to blue light. Its function is as follows. Confers resistance to turnip crinkle virus (TCV) by preventing COP1-mediated proteasome-mediated degradation of RPP8/HRT, thus promoting its stability in light. Exposure to darkness or blue-light induces degradation of CRY2, and in turn of RPP8/HRT, resulting in susceptibility to TCV. The sequence is that of Cryptochrome-2 from Arabidopsis thaliana (Mouse-ear cress).